Reading from the N-terminus, the 261-residue chain is Ribonuclease PH (261 aa).

Phosphate-binding positions include Arg87 and 125–127 (GTR).

The protein belongs to the RNase PH family. As to quaternary structure, homohexameric ring arranged as a trimer of dimers.

The enzyme catalyses tRNA(n+1) + phosphate = tRNA(n) + a ribonucleoside 5'-diphosphate. In terms of biological role, phosphorolytic 3'-5' exoribonuclease that plays an important role in tRNA 3'-end maturation. Removes nucleotide residues following the 3'-CCA terminus of tRNAs; can also add nucleotides to the ends of RNA molecules by using nucleoside diphosphates as substrates, but this may not be physiologically important. Probably plays a role in initiation of 16S rRNA degradation (leading to ribosome degradation) during starvation. The protein is Ribonuclease PH of Thermoanaerobacter pseudethanolicus (strain ATCC 33223 / 39E) (Clostridium thermohydrosulfuricum).